An 872-amino-acid polypeptide reads, in one-letter code: Alanine--tRNA ligase (872 aa).

Zn(2+) contacts are provided by H567, H571, C669, and H673.

The protein belongs to the class-II aminoacyl-tRNA synthetase family. It depends on Zn(2+) as a cofactor.

It localises to the cytoplasm. It carries out the reaction tRNA(Ala) + L-alanine + ATP = L-alanyl-tRNA(Ala) + AMP + diphosphate. Functionally, catalyzes the attachment of alanine to tRNA(Ala) in a two-step reaction: alanine is first activated by ATP to form Ala-AMP and then transferred to the acceptor end of tRNA(Ala). Also edits incorrectly charged Ser-tRNA(Ala) and Gly-tRNA(Ala) via its editing domain. The sequence is that of Alanine--tRNA ligase from Streptococcus pyogenes serotype M3 (strain ATCC BAA-595 / MGAS315).